We begin with the raw amino-acid sequence, 416 residues long: Pentraxin fusion protein (416 aa).

Positions 1-14 (MKSLLLFLKSQVFG) are cleaved as a signal peptide. N-linked (GlcNAc...) asparagine glycosylation is present at Asn-129. Positions 184-206 (GTEASDSSESVDGTEAPASPESD) are disordered. Positions 220–416 (TNKSFMFPKE…YSMIGNVAEV (197 aa)) constitute a Pentraxin (PTX) domain. Residue Asn-221 is glycosylated (N-linked (GlcNAc...) asparagine). Cys-251 and Cys-311 form a disulfide bridge. Ca(2+) is bound by residues Asp-275, Gln-353, Asp-354, and Gln-364.

Ca(2+) is required as a cofactor.

This chain is Pentraxin fusion protein (pxn1), found in Xenopus laevis (African clawed frog).